The sequence spans 374 residues: Translocating chain-associated membrane protein 1 (374 aa).

Residues 1-29 (MAIRKKSNKNPPLLSHEFLLQNHADIVSC) are Cytoplasmic-facing. Residues 30-50 (LAMLFLLGLMFEVTAKGAIIF) form a helical membrane-spanning segment. The Lumenal portion of the chain corresponds to 51–76 (VALQYNVTRPATEEQATESASLYHYG). N-linked (GlcNAc...) asparagine glycosylation occurs at Asn-56. Residues 77-97 (IKDLATVLFYMLVAIIIHAII) traverse the membrane as a helical segment. The Cytoplasmic portion of the chain corresponds to 98–121 (QEYVLDKINRRMHFSKTKHSKFNE). The region spanning 117–326 (SKFNESGQLS…NFQLRRWREH (210 aa)) is the TLC domain. Residues 122-142 (SGQLSAFYLFACVWGTFILIS) traverse the membrane as a helical segment. Topologically, residues 143-159 (ENYISDPTILWRAYPHN) are lumenal. The chain crosses the membrane as a helical span at residues 160–180 (LMTFQTKFFYISQLAYWLHAF). Topologically, residues 181–192 (PELYFQKTKKED) are cytoplasmic. Residues 193 to 213 (IPRQLVYIGLYLFHIAGAYLL) traverse the membrane as a helical segment. The Lumenal segment spans residues 214–217 (NLNH). The chain crosses the membrane as a helical span at residues 218-238 (LGLVLLVLHYFVEFLFHISRL). Over 239–251 (FYFSDEKYQKGFS) the chain is Cytoplasmic. A helical membrane pass occupies residues 252-272 (LWAVLFVLGRLLTLILSVLTV). The Lumenal segment spans residues 273–297 (GFGLARAENQKLDFSTGNFNVLAVR). A helical membrane pass occupies residues 298 to 318 (IAVLASICITQAFMMWKFINF). Residues 319–374 (QLRRWREHSAFQAPPVKRKPAVTKGRSSRKGTENGVNGTVTSNGADSPRNRKEKSS) are Cytoplasmic-facing. The segment at 333–374 (PVKRKPAVTKGRSSRKGTENGVNGTVTSNGADSPRNRKEKSS) is disordered. Over residues 334–347 (VKRKPAVTKGRSSR) the composition is skewed to basic residues. A compositionally biased stretch (polar residues) spans 352–363 (NGVNGTVTSNGA). Ser-365 is subject to Phosphoserine.

It belongs to the TRAM family. Interacts with SEC61B. May interact with Derlin-1/DERL1. In terms of processing, N-glycosylated.

The protein localises to the endoplasmic reticulum membrane. Its function is as follows. Involved in the translocation of nascent protein chains into or through the endoplasmic reticulum (ER) membrane by facilitating the proper chain positioning at the SEC61 channel. Regulates the exposure of nascent secretory protein chain to the cytosol during translocation into the ER. May affect the phospholipid bilayer in the vicinity of the lateral gate of the SEC61 channel, thereby facilitating ER protein transport. Intimately associates with transmembrane (TM) domain of nascent membrane proteins during the entire integration process into the ER membrane. Associates with the second TM domain of G-protein-coupled receptor opsin/OPSD nascent chain in the ER membrane, which may facilitate its integration into the membrane. Under conditions of ER stress, participates in the disposal of misfolded ER membrane proteins during the unfolded protein response (UPR), an integrated stress response (ISR) pathway, by selectively retrotranslocating misfolded ER-membrane proteins from the ER into the cytosol where they are ubiquitinated and degraded by the proteasome. This chain is Translocating chain-associated membrane protein 1, found in Mus musculus (Mouse).